Here is a 434-residue protein sequence, read N- to C-terminus: ATP-dependent RNA helicase RhlB (434 aa).

The short motif at 9–37 (QKFADLGLEPQVLDGLNAKGFINCTPIQA) is the Q motif element. The Helicase ATP-binding domain occupies 40 to 219 (LPVLLAGQDI…FEHMQEPEHV (180 aa)). 53–60 (AQTGTGKT) is a binding site for ATP. Residues 165 to 168 (DEAD) carry the DEAD box motif. One can recognise a Helicase C-terminal domain in the interval 245-390 (ALLQTLIEEE…QSDYDTSALL (146 aa)). Residues 394–434 (PAPIRLQRRPPQNRRNGSNNGQRQSGNRKHSRPRPPRSPQA) form a disordered region. Low complexity predominate over residues 406–418 (NRRNGSNNGQRQS). Residues 419 to 428 (GNRKHSRPRP) are compositionally biased toward basic residues.

It belongs to the DEAD box helicase family. RhlB subfamily. As to quaternary structure, component of the RNA degradosome, which is a multiprotein complex involved in RNA processing and mRNA degradation.

It is found in the cytoplasm. It catalyses the reaction ATP + H2O = ADP + phosphate + H(+). In terms of biological role, DEAD-box RNA helicase involved in RNA degradation. Has RNA-dependent ATPase activity and unwinds double-stranded RNA. In Aliivibrio salmonicida (strain LFI1238) (Vibrio salmonicida (strain LFI1238)), this protein is ATP-dependent RNA helicase RhlB.